Here is a 198-residue protein sequence, read N- to C-terminus: Probable GTP-binding protein EngB (198 aa).

One can recognise an EngB-type G domain in the interval 27–198; the sequence is DLPEVALAGR…ESWDTILSEL (172 aa). GTP is bound by residues 35–42, 62–66, 80–83, 147–150, and 179–181; these read GRSNVGKS, GKTQL, DVPG, TKAD, and FSS. Mg(2+) is bound by residues serine 42 and threonine 64.

It belongs to the TRAFAC class TrmE-Era-EngA-EngB-Septin-like GTPase superfamily. EngB GTPase family. Requires Mg(2+) as cofactor.

Necessary for normal cell division and for the maintenance of normal septation. The polypeptide is Probable GTP-binding protein EngB (Streptococcus agalactiae serotype Ia (strain ATCC 27591 / A909 / CDC SS700)).